The chain runs to 330 residues: MKKSFIHQQEEISFVKNTFTQYLIAKLDVVEVQGPILSRVGDGMQDNLSGTENPVSVNVLKIPNATFEVVHSLAKWKRHTLARFGFNEGEGLVVNMKALRPDEDSLDQTHSVYVDQWDWEKVIPDGKRNLAYLKETVETIYKVIRLTELAVEARYDIEAVLPKKITFIHTEELVAKYPDLTPKERENAITKEFGAVFLIGIGGVLPDGKPHDGRAPDYDDWTTETENGYHGLNGDILVWNDQLGSAFELSSMGIRVDEEALKRQVEMTGDQDRLAFDWHKSLLNGLFPLTIGGGIGQSRMVMFLLRKKHIGEVQTSVWPQEVRDSYDNIL.

The protein belongs to the class-II aminoacyl-tRNA synthetase family. AsnA subfamily.

It is found in the cytoplasm. It carries out the reaction L-aspartate + NH4(+) + ATP = L-asparagine + AMP + diphosphate + H(+). It functions in the pathway amino-acid biosynthesis; L-asparagine biosynthesis; L-asparagine from L-aspartate (ammonia route): step 1/1. The protein is Aspartate--ammonia ligase of Streptococcus pyogenes serotype M3 (strain ATCC BAA-595 / MGAS315).